Here is a 202-residue protein sequence, read N- to C-terminus: N-acetyltransferase 9-like protein (202 aa).

Residues 34–184 (EEIRRLTGSE…FTFELPKNRL (151 aa)) form the N-acetyltransferase domain.

The protein belongs to the acetyltransferase family. GNAT subfamily.

The sequence is that of N-acetyltransferase 9-like protein from Caenorhabditis elegans.